Consider the following 954-residue polypeptide: Glycine dehydrogenase (decarboxylating) (954 aa).

Position 704 is an N6-(pyridoxal phosphate)lysine (lysine 704).

The protein belongs to the GcvP family. In terms of assembly, the glycine cleavage system is composed of four proteins: P, T, L and H. Pyridoxal 5'-phosphate is required as a cofactor.

The enzyme catalyses N(6)-[(R)-lipoyl]-L-lysyl-[glycine-cleavage complex H protein] + glycine + H(+) = N(6)-[(R)-S(8)-aminomethyldihydrolipoyl]-L-lysyl-[glycine-cleavage complex H protein] + CO2. Its function is as follows. The glycine cleavage system catalyzes the degradation of glycine. The P protein binds the alpha-amino group of glycine through its pyridoxal phosphate cofactor; CO(2) is released and the remaining methylamine moiety is then transferred to the lipoamide cofactor of the H protein. The protein is Glycine dehydrogenase (decarboxylating) of Allorhizobium ampelinum (strain ATCC BAA-846 / DSM 112012 / S4) (Agrobacterium vitis (strain S4)).